Here is a 128-residue protein sequence, read N- to C-terminus: MQKIVRNRLIKIILCFCSTCLGISIILYNLEKNIIFFFPPSKINEAEQGKELRVGGLVKRDSINRISANKISFVITDNIKDLEILYQGVLPALFREGQGIIAIGQLSDNKFIARQLLAKHDENYRPPS.

The Cytoplasmic segment spans residues 1–8 (MQKIVRNR). Residues 9 to 29 (LIKIILCFCSTCLGISIILYN) form a helical; Signal-anchor for type II membrane protein membrane-spanning segment. Residues 30–128 (LEKNIIFFFP…KHDENYRPPS (99 aa)) lie on the Periplasmic side of the membrane. H120 and Y124 together coordinate heme.

The protein belongs to the CcmE/CycJ family.

The protein localises to the cell inner membrane. In terms of biological role, heme chaperone required for the biogenesis of c-type cytochromes. Transiently binds heme delivered by CcmC and transfers the heme to apo-cytochromes in a process facilitated by CcmF and CcmH. In Rickettsia typhi (strain ATCC VR-144 / Wilmington), this protein is Cytochrome c-type biogenesis protein CcmE.